The chain runs to 98 residues: Large ribosomal subunit protein uL23 (98 aa).

It belongs to the universal ribosomal protein uL23 family. In terms of assembly, part of the 50S ribosomal subunit. Contacts protein L29, and trigger factor when it is bound to the ribosome.

One of the early assembly proteins it binds 23S rRNA. One of the proteins that surrounds the polypeptide exit tunnel on the outside of the ribosome. Forms the main docking site for trigger factor binding to the ribosome. This Methylobacterium sp. (strain 4-46) protein is Large ribosomal subunit protein uL23.